Consider the following 191-residue polypeptide: Peptidyl-tRNA hydrolase (191 aa).

Tyrosine 14 is a binding site for tRNA. The active-site Proton acceptor is histidine 19. 3 residues coordinate tRNA: phenylalanine 64, asparagine 66, and asparagine 112.

It belongs to the PTH family. In terms of assembly, monomer.

It is found in the cytoplasm. It catalyses the reaction an N-acyl-L-alpha-aminoacyl-tRNA + H2O = an N-acyl-L-amino acid + a tRNA + H(+). Its function is as follows. Hydrolyzes ribosome-free peptidyl-tRNAs (with 1 or more amino acids incorporated), which drop off the ribosome during protein synthesis, or as a result of ribosome stalling. In terms of biological role, catalyzes the release of premature peptidyl moieties from peptidyl-tRNA molecules trapped in stalled 50S ribosomal subunits, and thus maintains levels of free tRNAs and 50S ribosomes. This Novosphingobium aromaticivorans (strain ATCC 700278 / DSM 12444 / CCUG 56034 / CIP 105152 / NBRC 16084 / F199) protein is Peptidyl-tRNA hydrolase.